The primary structure comprises 429 residues: Kynureninase (429 aa).

Pyridoxal 5'-phosphate contacts are provided by residues L109, T110, 137–140 (FPSD), D222, H225, and Y247. K248 carries the post-translational modification N6-(pyridoxal phosphate)lysine. Pyridoxal 5'-phosphate is bound by residues W278 and N306.

The protein belongs to the kynureninase family. Homodimer. The cofactor is pyridoxal 5'-phosphate.

The catalysed reaction is L-kynurenine + H2O = anthranilate + L-alanine + H(+). It carries out the reaction 3-hydroxy-L-kynurenine + H2O = 3-hydroxyanthranilate + L-alanine + H(+). Its pathway is amino-acid degradation; L-kynurenine degradation; L-alanine and anthranilate from L-kynurenine: step 1/1. It functions in the pathway cofactor biosynthesis; NAD(+) biosynthesis; quinolinate from L-kynurenine: step 2/3. Its function is as follows. Catalyzes the cleavage of L-kynurenine (L-Kyn) and L-3-hydroxykynurenine (L-3OHKyn) into anthranilic acid (AA) and 3-hydroxyanthranilic acid (3-OHAA), respectively. The chain is Kynureninase from Salinispora tropica (strain ATCC BAA-916 / DSM 44818 / JCM 13857 / NBRC 105044 / CNB-440).